The sequence spans 178 residues: Nicotinamide-nucleotide adenylyltransferase (178 aa).

The protein belongs to the archaeal NMN adenylyltransferase family.

Its subcellular location is the cytoplasm. It carries out the reaction beta-nicotinamide D-ribonucleotide + ATP + H(+) = diphosphate + NAD(+). Its pathway is cofactor biosynthesis; NAD(+) biosynthesis; NAD(+) from nicotinamide D-ribonucleotide: step 1/1. The chain is Nicotinamide-nucleotide adenylyltransferase from Caldivirga maquilingensis (strain ATCC 700844 / DSM 13496 / JCM 10307 / IC-167).